Reading from the N-terminus, the 186-residue chain is Elongation factor P (186 aa).

Belongs to the elongation factor P family.

It localises to the cytoplasm. The protein operates within protein biosynthesis; polypeptide chain elongation. Its function is as follows. Involved in peptide bond synthesis. Stimulates efficient translation and peptide-bond synthesis on native or reconstituted 70S ribosomes in vitro. Probably functions indirectly by altering the affinity of the ribosome for aminoacyl-tRNA, thus increasing their reactivity as acceptors for peptidyl transferase. The sequence is that of Elongation factor P from Shewanella sp. (strain ANA-3).